A 963-amino-acid polypeptide reads, in one-letter code: Ubiquitin carboxyl-terminal hydrolase 4 (963 aa).

Positions 11-122 constitute a DUSP domain; the sequence is PDAETQKSEL…GQQPIVRKVV (112 aa). Positions 27–216 are necessary for interaction with SART3; the sequence is TLQRGAQWYL…LYQGQVLVIE (190 aa). The Nuclear export signal motif lies at 133 to 141; that stretch reads VEVYLLELK. The region spanning 142–226 is the Ubiquitin-like 1 domain; that stretch reads LCENSDPTNV…PQNEDGTWPR (85 aa). A disordered region spans residues 219–277; it reads NEDGTWPRQTQQSKSSTAPSRNFTTSPKSSASPYSSVSASPIANGDSTNTSGMHSSGVS. A compositionally biased stretch (polar residues) spans 225–243; sequence PRQTQQSKSSTAPSRNFTT. Residues 229–295 are required for USP4 activation by providing conformational flexibility between the DUSP and catalytic domains; that stretch reads QQSKSSTAPS…SYNCQESPLT (67 aa). Residues 244 to 261 are compositionally biased toward low complexity; that stretch reads SPKSSASPYSSVSASPIA. In terms of domain architecture, USP spans 302–923; the sequence is CGLGNLGNTC…AAYVLFYQRR (622 aa). C311 functions as the Nucleophile in the catalytic mechanism. Residues 384-386 are regulates ubiquitin dissociation; the sequence is PQF. A necessary for interaction with RBL2 region spans residues 405–407; the sequence is LHE. At S445 the chain carries Phosphoserine. Positions 459-463 are necessary for interaction with RB1 and RBL2; that stretch reads LVCPE. 2 residues coordinate Zn(2+): C461 and C464. Positions 483 to 571 constitute a Ubiquitin-like 2 domain; that stretch reads LKKDRVMEIF…IFVYEVCSTS (89 aa). The interval 485-775 is interacts with DUSP and ubiquitin-like 1 domains and is required for USP4 activation; the sequence is KDRVMEIFLV…LQPQKKKKTA (291 aa). The tract at residues 634–701 is disordered; it reads PLPDESGSSP…ATQKKNKGRP (68 aa). Phosphoserine is present on residues S675 and S680. Residues 767 to 772 carry the Nuclear localization signal motif; it reads QPQKKK. Residues C799 and C802 each coordinate Zn(2+). H881 functions as the Proton acceptor in the catalytic mechanism. Positions 930–963 are disordered; sequence TPSLSFPGSSDGGARPSSSQQGTGDDETYSMDTN. Residues 953-963 are compositionally biased toward acidic residues; sequence GDDETYSMDTN.

Belongs to the peptidase C19 family. USP4 subfamily. As to quaternary structure, interacts with RB1 (both dephosphorylated and hypophosphorylated forms). Interacts with RBL1 and RBL2. Interacts with ADORA2A (via cytoplasmic C-terminus); the interaction is direct. Interacts with SART3; recruits USP4 to its substrate PRPF3. Phosphorylated at Ser-445 by PKB/AKT1 in response to EGF stimulus, promoting its ability deubiquitinate RHEB. Post-translationally, monoubiquitinated by TRIM21. Ubiquitination does not lead to its proteasomal degradation. Autodeubiquitinated.

The protein localises to the cytoplasm. It localises to the nucleus. It catalyses the reaction Thiol-dependent hydrolysis of ester, thioester, amide, peptide and isopeptide bonds formed by the C-terminal Gly of ubiquitin (a 76-residue protein attached to proteins as an intracellular targeting signal).. With respect to regulation, the completion of the deubiquitinase reaction is mediated by the DUSP and ubiquitin-like 1 domains which promotes the release of ubiquitin from the catalytic site enabling subsequent reactions to occur. Its function is as follows. Deubiquitinating enzyme that removes conjugated ubiquitin from target proteins. Deubiquitinates PDPK1. Deubiquitinates TRIM21. Deubiquitinates receptor ADORA2A which increases the amount of functional receptor at the cell surface. Deubiquitinates HAS2. Deubiquitinates RHEB in response to EGF signaling, promoting mTORC1 signaling. May regulate mRNA splicing through deubiquitination of the U4 spliceosomal protein PRPF3. This may prevent its recognition by the U5 component PRPF8 thereby destabilizing interactions within the U4/U6.U5 snRNP. May also play a role in the regulation of quality control in the ER. In Bos taurus (Bovine), this protein is Ubiquitin carboxyl-terminal hydrolase 4 (USP4).